The primary structure comprises 323 residues: Lipoyl synthase (323 aa).

Residues cysteine 65, cysteine 70, cysteine 76, cysteine 91, cysteine 95, cysteine 98, and serine 304 each contribute to the [4Fe-4S] cluster site. One can recognise a Radical SAM core domain in the interval 77-293; sequence FNNGTATFMI…KKEALSIGFT (217 aa).

Belongs to the radical SAM superfamily. Lipoyl synthase family. It depends on [4Fe-4S] cluster as a cofactor.

The protein resides in the cytoplasm. It catalyses the reaction [[Fe-S] cluster scaffold protein carrying a second [4Fe-4S](2+) cluster] + N(6)-octanoyl-L-lysyl-[protein] + 2 oxidized [2Fe-2S]-[ferredoxin] + 2 S-adenosyl-L-methionine + 4 H(+) = [[Fe-S] cluster scaffold protein] + N(6)-[(R)-dihydrolipoyl]-L-lysyl-[protein] + 4 Fe(3+) + 2 hydrogen sulfide + 2 5'-deoxyadenosine + 2 L-methionine + 2 reduced [2Fe-2S]-[ferredoxin]. Its pathway is protein modification; protein lipoylation via endogenous pathway; protein N(6)-(lipoyl)lysine from octanoyl-[acyl-carrier-protein]: step 2/2. In terms of biological role, catalyzes the radical-mediated insertion of two sulfur atoms into the C-6 and C-8 positions of the octanoyl moiety bound to the lipoyl domains of lipoate-dependent enzymes, thereby converting the octanoylated domains into lipoylated derivatives. The protein is Lipoyl synthase of Buchnera aphidicola subsp. Acyrthosiphon pisum (strain APS) (Acyrthosiphon pisum symbiotic bacterium).